Here is an 858-residue protein sequence, read N- to C-terminus: MPGLAILGLSLAAFLELGMGSSLCLSQQFKAQGDYILGGLFPLGTTEEATLNQRTQPNGILCTRFSPLGLFLAMAMKMAVEEINNGSALLPGLRLGYDLFDTCSEPVVTMKPSLMFMAKVGSQSIAAYCNYTQYQPRVLAVIGPHSSELALITGKFFSFFLMPQVSYSASMDRLSDRETFPSFFRTVPSDRVQLQAVVTLLQNFSWNWVAALGSDDDYGREGLSIFSGLANSRGICIAHEGLVPQHDTSGQQLGKVVDVLRQVNQSKVQVVVLFASARAVYSLFSYSILHDLSPKVWVASESWLTSDLVMTLPNIARVGTVLGFLQRGALLPEFSHYVETRLALAADPTFCASLKAELDLEERVMGPRCSQCDYIMLQNLSSGLMQNLSAGQLHHQIFATYAAVYSVAQALHNTLQCNVSHCHTSEPVQPWQLLENMYNMSFRARDLTLQFDAKGSVDMEYDLKMWVWQSPTPVLHTVGTFNGTLQLQHSKMYWPGNQVPVSQCSRQCKDGQVRRVKGFHSCCYDCVDCKAGSYRKHPDDFTCTPCGKDQWSPEKSTTCLPRRPKFLAWGEPAVLSLLLLLCLVLGLTLAALGLFVHYWDSPLVQASGGSLFCFGLICLGLFCLSVLLFPGRPRSASCLAQQPMAHLPLTGCLSTLFLQAAEIFVESELPLSWANWLCSYLRGPWAWLVVLLATLVEAALCAWYLMAFPPEVVTDWQVLPTEVLEHCRMRSWVSLGLVHITNAVLAFLCFLGTFLVQSQPGRYNRARGLTFAMLAYFIIWVSFVPLLANVQVAYQPAVQMGAILFCALGILATFHLPKCYVLLWLPELNTQEFFLGRSPKEASDGNSGSSEATRGHSE.

An N-terminal signal peptide occupies residues 1–20 (MPGLAILGLSLAAFLELGMG). Over 21-575 (SSLCLSQQFK…FLAWGEPAVL (555 aa)) the chain is Extracellular. N-linked (GlcNAc...) asparagine glycans are attached at residues Asn-85, Asn-130, Asn-203, Asn-264, Asn-379, Asn-387, Asn-418, Asn-439, and Asn-482. Residues 576–596 (SLLLLLCLVLGLTLAALGLFV) traverse the membrane as a helical segment. Topologically, residues 597 to 610 (HYWDSPLVQASGGS) are cytoplasmic. Residues 611–631 (LFCFGLICLGLFCLSVLLFPG) form a helical membrane-spanning segment. Topologically, residues 632 to 644 (RPRSASCLAQQPM) are extracellular. A helical transmembrane segment spans residues 645–665 (AHLPLTGCLSTLFLQAAEIFV). Over 666–687 (ESELPLSWANWLCSYLRGPWAW) the chain is Cytoplasmic. Residues 688 to 708 (LVVLLATLVEAALCAWYLMAF) form a helical membrane-spanning segment. Over 709–735 (PPEVVTDWQVLPTEVLEHCRMRSWVSL) the chain is Extracellular. Residues 736–756 (GLVHITNAVLAFLCFLGTFLV) form a helical membrane-spanning segment. Residues 757-767 (QSQPGRYNRAR) lie on the Cytoplasmic side of the membrane. A helical transmembrane segment spans residues 768–788 (GLTFAMLAYFIIWVSFVPLLA). Over 789-796 (NVQVAYQP) the chain is Extracellular. Residues 797 to 817 (AVQMGAILFCALGILATFHLP) traverse the membrane as a helical segment. Over 818–858 (KCYVLLWLPELNTQEFFLGRSPKEASDGNSGSSEATRGHSE) the chain is Cytoplasmic. Positions 839 to 858 (PKEASDGNSGSSEATRGHSE) are disordered.

It belongs to the G-protein coupled receptor 3 family. TAS1R subfamily. In terms of assembly, forms homodimers or heterodimers with TAS1R1 and TAS1R2.

It is found in the cell membrane. Its function is as follows. Putative taste receptor. TAS1R1/TAS1R3 responds to the umami taste stimulus (the taste of monosodium glutamate) and also to most of the 20 standard L-amino acids, but not to their D-enantiomers or other compounds. TAS1R2/TAS1R3 recognizes diverse natural and synthetic sweeteners. TAS1R3 is essential for the recognition and response to the disaccharide trehalose. Sequence differences within and between species can significantly influence the selectivity and specificity of taste responses. This Rattus norvegicus (Rat) protein is Taste receptor type 1 member 3 (Tas1r3).